A 94-amino-acid polypeptide reads, in one-letter code: Nucleoid-associated protein MYPE8070 (94 aa).

This sequence belongs to the YbaB/EbfC family. Homodimer.

The protein localises to the cytoplasm. The protein resides in the nucleoid. Binds to DNA and alters its conformation. May be involved in regulation of gene expression, nucleoid organization and DNA protection. This Malacoplasma penetrans (strain HF-2) (Mycoplasma penetrans) protein is Nucleoid-associated protein MYPE8070.